Reading from the N-terminus, the 67-residue chain is Histone H2A (67 aa).

The residue at position 60 (Gln60) is an N5-methylglutamine.

The protein belongs to the histone H2A family. As to quaternary structure, the nucleosome is a histone octamer containing two molecules each of H2A, H2B, H3 and H4 assembled in one H3-H4 heterotetramer and two H2A-H2B heterodimers. The octamer wraps approximately 147 bp of DNA.

It is found in the nucleus. The protein resides in the chromosome. Its function is as follows. Core component of nucleosome. Nucleosomes wrap and compact DNA into chromatin, limiting DNA accessibility to the cellular machineries which require DNA as a template. Histones thereby play a central role in transcription regulation, DNA repair, DNA replication and chromosomal stability. DNA accessibility is regulated via a complex set of post-translational modifications of histones, also called histone code, and nucleosome remodeling. The sequence is that of Histone H2A from Olisthodiscus luteus (Marine phytoflagellate).